The chain runs to 351 residues: MMKLRVLTLGILIILLITACSAPTPTTPAAAPTAAPAPNAQPTLQQVTLAMSYIPNIQFAPYYVAAAKGYYAAEGIEVVFDYNFENDVLQRAATWPTSGVAFATTSGTSVLLARQQGLPVKTVMTLYQRFPIAFFAKSNVPLASVNDLRGQTIGIPGRFGESFYALLAALYAGGMSEADVTVQEIGFTQTAAVMEDKVPVAIGYAMNEPVQLRGQGVEVNVLLAADVFNLAANGIAVSEALIAQNPELVRKFVRASLRGLADTLANPDEAFDLSLQFIPEAQLGDLSLQRQVLQESLPFWQNELTAQYGLGYTDGQLWTRTEEFMRAAGLLSAPVDVQQAFTNEFVPGGSY.

Residues 1–19 form the signal peptide; the sequence is MMKLRVLTLGILIILLITA. C20 carries the N-palmitoyl cysteine lipid modification. C20 is lipidated: S-diacylglycerol cysteine.

The protein belongs to the NMT1 family. As to quaternary structure, the complex is likely composed of an ATP-binding protein, a transmembrane protein (RibX) and a solute-binding protein (RibY).

Its subcellular location is the cell membrane. Its function is as follows. Part of an ABC transporter complex that transports riboflavin into the cell. Binds riboflavin. In Chloroflexus aurantiacus (strain ATCC 29366 / DSM 635 / J-10-fl), this protein is Riboflavin-binding protein RibY.